A 527-amino-acid polypeptide reads, in one-letter code: ATP synthase subunit alpha (527 aa).

169–176 is an ATP binding site; the sequence is GDRQTGKT.

The protein belongs to the ATPase alpha/beta chains family. As to quaternary structure, F-type ATPases have 2 components, CF(1) - the catalytic core - and CF(0) - the membrane proton channel. CF(1) has five subunits: alpha(3), beta(3), gamma(1), delta(1), epsilon(1). CF(0) has three main subunits: a(1), b(2) and c(9-12). The alpha and beta chains form an alternating ring which encloses part of the gamma chain. CF(1) is attached to CF(0) by a central stalk formed by the gamma and epsilon chains, while a peripheral stalk is formed by the delta and b chains.

The protein resides in the cell membrane. It catalyses the reaction ATP + H2O + 4 H(+)(in) = ADP + phosphate + 5 H(+)(out). Functionally, produces ATP from ADP in the presence of a proton gradient across the membrane. The alpha chain is a regulatory subunit. The polypeptide is ATP synthase subunit alpha (Metamycoplasma arthritidis (strain 158L3-1) (Mycoplasma arthritidis)).